Consider the following 91-residue polypeptide: uncharacterized protein (91 aa).

This is an uncharacterized protein from Saccharolobus islandicus (Sulfolobus islandicus).